The chain runs to 60 residues: Large ribosomal subunit protein bL32 (60 aa).

Residues 1 to 43 (MAVQQNRKTRSRRGMRRSHDALTGKTLSVDSTTGEKHLRHHVT) are disordered. The span at 7–16 (RKTRSRRGMR) shows a compositional bias: basic residues.

Belongs to the bacterial ribosomal protein bL32 family.

The protein is Large ribosomal subunit protein bL32 of Saccharophagus degradans (strain 2-40 / ATCC 43961 / DSM 17024).